The sequence spans 207 residues: Guanylate kinase (207 aa).

The Guanylate kinase-like domain maps to 5–184 (GNLFIVSAPS…ALADLRAIIR (180 aa)). 12 to 19 (APSGAGKS) contributes to the ATP binding site.

This sequence belongs to the guanylate kinase family.

Its subcellular location is the cytoplasm. The catalysed reaction is GMP + ATP = GDP + ADP. Essential for recycling GMP and indirectly, cGMP. The chain is Guanylate kinase from Shewanella oneidensis (strain ATCC 700550 / JCM 31522 / CIP 106686 / LMG 19005 / NCIMB 14063 / MR-1).